The chain runs to 212 residues: Ribosomal RNA small subunit methyltransferase G (212 aa).

S-adenosyl-L-methionine-binding positions include G72, L77, 123–124, and R138; that span reads VE.

Belongs to the methyltransferase superfamily. RNA methyltransferase RsmG family.

It is found in the cytoplasm. The catalysed reaction is guanosine(527) in 16S rRNA + S-adenosyl-L-methionine = N(7)-methylguanosine(527) in 16S rRNA + S-adenosyl-L-homocysteine. Its function is as follows. Specifically methylates the N7 position of guanine in position 527 of 16S rRNA. This Histophilus somni (strain 129Pt) (Haemophilus somnus) protein is Ribosomal RNA small subunit methyltransferase G.